Reading from the N-terminus, the 117-residue chain is uncharacterized protein (117 aa).

An N-terminal signal peptide occupies residues 1–38 (MIIDSSRIPSFTQLHSTMTRAPLLLLCVALVLLGHVNG).

It is found in the secreted. This is an uncharacterized protein from Homo sapiens (Human).